The sequence spans 545 residues: Chaperonin GroEL (545 aa).

Residues 30 to 33 (TLGP), lysine 51, 87 to 91 (DGTTT), glycine 415, and aspartate 495 each bind ATP.

Belongs to the chaperonin (HSP60) family. In terms of assembly, forms a cylinder of 14 subunits composed of two heptameric rings stacked back-to-back. Interacts with the co-chaperonin GroES.

It localises to the cytoplasm. The catalysed reaction is ATP + H2O + a folded polypeptide = ADP + phosphate + an unfolded polypeptide.. Functionally, together with its co-chaperonin GroES, plays an essential role in assisting protein folding. The GroEL-GroES system forms a nano-cage that allows encapsulation of the non-native substrate proteins and provides a physical environment optimized to promote and accelerate protein folding. The sequence is that of Chaperonin GroEL from Shewanella putrefaciens (strain CN-32 / ATCC BAA-453).